Reading from the N-terminus, the 656-residue chain is Pheromone-processing carboxypeptidase KEX1 (656 aa).

An N-terminal signal peptide occupies residues 1–17 (MFFHAILVLIQVALALG). The Lumenal segment spans residues 18–536 (ASPRAGSSER…DNNTSHKIER (519 aa)). 2 N-linked (GlcNAc...) asparagine glycosylation sites follow: N61 and N118. Active-site residues include S180 and D388. 2 N-linked (GlcNAc...) asparagine glycosylation sites follow: N434 and N442. H445 is a catalytic residue. A helical membrane pass occupies residues 537–557 (AIQLLVIIVLLWGIYALYSSY). The Cytoplasmic portion of the chain corresponds to 558-656 (KSRPSSIIKS…SRNEPSSNQK (99 aa)). The interval 626-656 (MSSASPIDDFVVVSDDEEEEPSRNEPSSNQK) is disordered.

It belongs to the peptidase S10 family.

Its subcellular location is the golgi apparatus. It is found in the trans-Golgi network membrane. It carries out the reaction Preferential release of a C-terminal arginine or lysine residue.. Protease with a carboxypeptidase B-like function involved in the C-terminal processing of the lysine and arginine residues from protein precursors. Promotes cell fusion and is involved in the programmed cell death. This chain is Pheromone-processing carboxypeptidase KEX1 (KEX1), found in Meyerozyma guilliermondii (strain ATCC 6260 / CBS 566 / DSM 6381 / JCM 1539 / NBRC 10279 / NRRL Y-324) (Yeast).